The sequence spans 533 residues: Atypical kinase COQ8B, mitochondrial (533 aa).

A helical transmembrane segment spans residues 93-109 (LASFGGLAVGLGLGALA). The KxGQ motif signature appears at 156 to 159 (KIGQ). Positions 192–424 (MMRVLEEELG…DRVLQKSQDL (233 aa)) constitute a Protein kinase domain. The AAAS motif motif lies at 217 to 220 (AAAS). ATP-binding positions include Ser-220, Lys-238, and 325-328 (MELA). The active-site Proton acceptor is the Asp-368. Asn-373 and Asp-387 together coordinate ATP.

It belongs to the protein kinase superfamily. ADCK protein kinase family. In terms of assembly, homodimer; homodimerizes via its transmembrane region. Interacts with COQ6 and COQ7. Interacts with the multi-subunit COQ enzyme complex, composed of at least COQ3, COQ4, COQ5, COQ6, COQ7 and COQ9.

It is found in the mitochondrion membrane. The protein resides in the cytoplasm. It localises to the cytosol. Its subcellular location is the cell membrane. It functions in the pathway cofactor biosynthesis; ubiquinone biosynthesis. Functionally, atypical kinase involved in the biosynthesis of coenzyme Q, also named ubiquinone, an essential lipid-soluble electron transporter for aerobic cellular respiration. Its substrate specificity is still unclear: may act as a protein kinase that mediates phosphorylation of COQ3. According to other reports, acts as a small molecule kinase, possibly a lipid kinase that phosphorylates a prenyl lipid in the ubiquinone biosynthesis pathway, as suggested by its ability to bind coenzyme Q lipid intermediates. However, the small molecule kinase activity was not confirmed by another publication. Required for podocyte migration. The polypeptide is Atypical kinase COQ8B, mitochondrial (Mus musculus (Mouse)).